Reading from the N-terminus, the 496-residue chain is Cytochrome P450 71D18 (496 aa).

Residues 2–22 traverse the membrane as a helical; Signal-anchor for type II membrane protein segment; that stretch reads ELDLLSAIIILVATYIVSLLI. Position 436 (C436) interacts with heme.

This sequence belongs to the cytochrome P450 family. Heme is required as a cofactor.

The protein localises to the endoplasmic reticulum membrane. The enzyme catalyses (4S)-limonene + reduced [NADPH--hemoprotein reductase] + O2 = (1S,5R)-carveol + oxidized [NADPH--hemoprotein reductase] + H2O + H(+). Functionally, hydroxylates (-)-(4S)-limonene to (-)-trans-carveol, a precursor of (-)-carvone. Fluorinated substrate analogs are hydroxylated with the same regio- and stereochemistry. In Mentha gracilis (Gingermint), this protein is Cytochrome P450 71D18 (CYP71D18).